A 170-amino-acid chain; its full sequence is CFA/I fimbrial subunit B (170 aa).

A signal peptide spans Met-1–Ala-23.

This sequence belongs to the fimbrial CS1 protein family. CFA/I fimbriae are rather rigid, thread-like filaments of 0.5-1 micrometer, with an apparent axial hole, and a diameter of 7 nanometers. A single CFA/I fimbria consists of about 100 identical protein subunits.

Its subcellular location is the fimbrium. Its function is as follows. Fimbriae (also called pili), polar filaments radiating from the surface of the bacterium to a length of 0.5-1.5 micrometers and numbering 100-300 per cell, enable bacteria to colonize the epithelium of specific host organs. The polypeptide is CFA/I fimbrial subunit B (cfaB) (Escherichia coli).